The primary structure comprises 199 residues: NAD(P)H dehydrogenase (quinone) (199 aa).

Residues 4–190 (VLVLYYSTYG…EGARHQGELI (187 aa)) form the Flavodoxin-like domain. FMN contacts are provided by residues 10 to 15 (STYGHV) and 78 to 80 (TRF). Y12 is a binding site for NAD(+). W98 contributes to the substrate binding site. Residues 113–119 (STATQHG) and H134 each bind FMN.

The protein belongs to the WrbA family. It depends on FMN as a cofactor.

The enzyme catalyses a quinone + NADH + H(+) = a quinol + NAD(+). The catalysed reaction is a quinone + NADPH + H(+) = a quinol + NADP(+). The sequence is that of NAD(P)H dehydrogenase (quinone) from Cupriavidus metallidurans (strain ATCC 43123 / DSM 2839 / NBRC 102507 / CH34) (Ralstonia metallidurans).